The following is a 244-amino-acid chain: Leucyl/phenylalanyl-tRNA--protein transferase (244 aa).

The protein belongs to the L/F-transferase family.

Its subcellular location is the cytoplasm. It catalyses the reaction N-terminal L-lysyl-[protein] + L-leucyl-tRNA(Leu) = N-terminal L-leucyl-L-lysyl-[protein] + tRNA(Leu) + H(+). The catalysed reaction is N-terminal L-arginyl-[protein] + L-leucyl-tRNA(Leu) = N-terminal L-leucyl-L-arginyl-[protein] + tRNA(Leu) + H(+). The enzyme catalyses L-phenylalanyl-tRNA(Phe) + an N-terminal L-alpha-aminoacyl-[protein] = an N-terminal L-phenylalanyl-L-alpha-aminoacyl-[protein] + tRNA(Phe). Its function is as follows. Functions in the N-end rule pathway of protein degradation where it conjugates Leu, Phe and, less efficiently, Met from aminoacyl-tRNAs to the N-termini of proteins containing an N-terminal arginine or lysine. The protein is Leucyl/phenylalanyl-tRNA--protein transferase of Janthinobacterium sp. (strain Marseille) (Minibacterium massiliensis).